Reading from the N-terminus, the 694-residue chain is Transcription activator of gluconeogenesis Pc22g08580 (694 aa).

Residues 1–61 (MNMETKNGSP…DPSRPRRKKA (61 aa)) are disordered. Positions 17 to 55 (SGERDSADITEHEQMDVKPKTNGDSKADRKAANAKDPSR) are enriched in basic and acidic residues. The zn(2)-C6 fungal-type DNA-binding region spans 65–93 (CFACQRAHLTCGDERPCQRCIKRGLQDAC). 3 disordered regions span residues 126 to 240 (TLRN…GPFF), 276 to 300 (AAGDSPTDSAGQRGSIGRSGSAQFS), and 552 to 582 (TGGSAVPQSGTTSRGSFTPRGSTLENSGTGR). Positions 132 to 141 (PISRNGTNAV) are enriched in polar residues. The span at 142–171 (NSNQQHSQQHPQQPTNPTNNNFYPTPQTQT) shows a compositional bias: low complexity. 3 stretches are compositionally biased toward polar residues: residues 172 to 234 (GSYN…SQNP), 281 to 300 (PTDSAGQRGSIGRSGSAQFS), and 552 to 581 (TGGSAVPQSGTTSRGSFTPRGSTLENSGTG).

It belongs to the ERT1/acuK family.

It localises to the nucleus. In terms of biological role, transcription factor which regulates nonfermentable carbon utilization. Activator of gluconeogenetic genes. The polypeptide is Transcription activator of gluconeogenesis Pc22g08580 (Penicillium rubens (strain ATCC 28089 / DSM 1075 / NRRL 1951 / Wisconsin 54-1255) (Penicillium chrysogenum)).